The sequence spans 393 residues: Cobalt-precorrin-5B C(1)-methyltransferase (393 aa).

A disordered region spans residues Met-1–Phe-35. Basic and acidic residues predominate over residues Glu-18 to Asn-31.

This sequence belongs to the CbiD family.

It catalyses the reaction Co-precorrin-5B + S-adenosyl-L-methionine = Co-precorrin-6A + S-adenosyl-L-homocysteine. It functions in the pathway cofactor biosynthesis; adenosylcobalamin biosynthesis; cob(II)yrinate a,c-diamide from sirohydrochlorin (anaerobic route): step 6/10. Catalyzes the methylation of C-1 in cobalt-precorrin-5B to form cobalt-precorrin-6A. This Dechloromonas aromatica (strain RCB) protein is Cobalt-precorrin-5B C(1)-methyltransferase.